A 304-amino-acid chain; its full sequence is Type II methyltransferase M.ScaI (304 aa).

The protein belongs to the N(4)/N(6)-methyltransferase family. N(4) subfamily.

It carries out the reaction a 2'-deoxycytidine in DNA + S-adenosyl-L-methionine = an N(4)-methyl-2'-deoxycytidine in DNA + S-adenosyl-L-homocysteine + H(+). Functionally, a methylase that recognizes the double-stranded sequence 5'-AGTACT-3', methylates C-5 on both strands, and protects the DNA from cleavage by the ScaI endonuclease. This chain is Type II methyltransferase M.ScaI, found in Streptomyces caespitosus.